A 490-amino-acid chain; its full sequence is Probable cytosol aminopeptidase (490 aa).

Mn(2+) is bound by residues Lys-257 and Asp-262. Lys-269 is an active-site residue. Residues Asp-281, Asp-341, and Glu-343 each contribute to the Mn(2+) site. Residue Arg-345 is part of the active site.

It belongs to the peptidase M17 family. Requires Mn(2+) as cofactor.

It localises to the cytoplasm. It catalyses the reaction Release of an N-terminal amino acid, Xaa-|-Yaa-, in which Xaa is preferably Leu, but may be other amino acids including Pro although not Arg or Lys, and Yaa may be Pro. Amino acid amides and methyl esters are also readily hydrolyzed, but rates on arylamides are exceedingly low.. The enzyme catalyses Release of an N-terminal amino acid, preferentially leucine, but not glutamic or aspartic acids.. Its function is as follows. Presumably involved in the processing and regular turnover of intracellular proteins. Catalyzes the removal of unsubstituted N-terminal amino acids from various peptides. The polypeptide is Probable cytosol aminopeptidase (Prochlorococcus marinus (strain MIT 9312)).